A 93-amino-acid chain; its full sequence is Alpha-defensin 7 (93 aa).

The signal sequence occupies residues 1–19 (MKTLILLSALVLLAFQVQA). Residues 20–58 (DPIQNTDEETKTEEQPGEDDQAVSVSFGDPEGSSLQEES) constitute a propeptide that is removed on maturation. The disordered stretch occupies residues 22–56 (IQNTDEETKTEEQPGEDDQAVSVSFGDPEGSSLQE). Disulfide bonds link Cys64–Cys92, Cys66–Cys81, and Cys71–Cys91.

This sequence belongs to the alpha-defensin family. Paneth cells of the small bowel.

It is found in the secreted. Probably contributes to the antimicrobial barrier function of the small bowel mucosa. This is Alpha-defensin 7 (Defa7) from Mus musculus (Mouse).